Here is a 141-residue protein sequence, read N- to C-terminus: Large ribosomal subunit protein bL17 (141 aa).

It belongs to the bacterial ribosomal protein bL17 family. In terms of assembly, part of the 50S ribosomal subunit. Contacts protein L32.

The protein is Large ribosomal subunit protein bL17 of Sinorhizobium fredii (strain NBRC 101917 / NGR234).